Here is a 294-residue protein sequence, read N- to C-terminus: Protoheme IX farnesyltransferase (294 aa).

Transmembrane regions (helical) follow at residues 22 to 42, 46 to 66, 89 to 109, 116 to 136, 143 to 163, 170 to 190, 211 to 231, 232 to 252, and 272 to 292; these read VTQLAVFCAVIGMFLATPDLP, IVIAATIGIWLLAGAAFAINC, ITVPQTLVFSGVIGGAGMWVL, LTMWLTFATFVGYAVIYTIIL, NIVIGGLSGAMPPALGWAAVA, AWILVLIIFIWTPPHFWALAL, AFTQFHIWLYTIALVATTMLP, FAVGMSGLIYLVVAAVLDVIF, and FTYSIIYLSLLFAALLVDHYL.

This sequence belongs to the UbiA prenyltransferase family. Protoheme IX farnesyltransferase subfamily.

It localises to the cell inner membrane. The catalysed reaction is heme b + (2E,6E)-farnesyl diphosphate + H2O = Fe(II)-heme o + diphosphate. It participates in porphyrin-containing compound metabolism; heme O biosynthesis; heme O from protoheme: step 1/1. In terms of biological role, converts heme B (protoheme IX) to heme O by substitution of the vinyl group on carbon 2 of heme B porphyrin ring with a hydroxyethyl farnesyl side group. This chain is Protoheme IX farnesyltransferase, found in Herminiimonas arsenicoxydans.